A 63-amino-acid chain; its full sequence is Small ribosomal subunit protein eS17 (63 aa).

Belongs to the eukaryotic ribosomal protein eS17 family.

This is Small ribosomal subunit protein eS17 from Methanosphaerula palustris (strain ATCC BAA-1556 / DSM 19958 / E1-9c).